A 220-amino-acid polypeptide reads, in one-letter code: UPF0758 protein APL_1970 (220 aa).

The MPN domain maps to 98-220 (NINEPYLAVM…YFSFEEEKFR (123 aa)). Residues histidine 169, histidine 171, and aspartate 182 each contribute to the Zn(2+) site. The JAMM motif signature appears at 169 to 182 (HNHPSGNCTPSESD).

It belongs to the UPF0758 family.

The protein is UPF0758 protein APL_1970 of Actinobacillus pleuropneumoniae serotype 5b (strain L20).